Consider the following 334-residue polypeptide: Glyceraldehyde-3-phosphate dehydrogenase (334 aa).

NAD(+) is bound by residues 12 to 13 (RI), aspartate 37, arginine 81, and serine 123. D-glyceraldehyde 3-phosphate is bound by residues 153–155 (SCT) and threonine 184. The active-site Nucleophile is cysteine 154. Residue asparagine 185 coordinates NAD(+). Residues arginine 199, 212 to 213 (TG), and arginine 235 each bind D-glyceraldehyde 3-phosphate. Asparagine 314 contributes to the NAD(+) binding site.

It belongs to the glyceraldehyde-3-phosphate dehydrogenase family. As to quaternary structure, homotetramer.

It localises to the cytoplasm. The enzyme catalyses D-glyceraldehyde 3-phosphate + phosphate + NAD(+) = (2R)-3-phospho-glyceroyl phosphate + NADH + H(+). The protein operates within carbohydrate degradation; glycolysis; pyruvate from D-glyceraldehyde 3-phosphate: step 1/5. Functionally, catalyzes the oxidative phosphorylation of glyceraldehyde 3-phosphate (G3P) to 1,3-bisphosphoglycerate (BPG) using the cofactor NAD. The first reaction step involves the formation of a hemiacetal intermediate between G3P and a cysteine residue, and this hemiacetal intermediate is then oxidized to a thioester, with concomitant reduction of NAD to NADH. The reduced NADH is then exchanged with the second NAD, and the thioester is attacked by a nucleophilic inorganic phosphate to produce BPG. This is Glyceraldehyde-3-phosphate dehydrogenase (gap) from Pseudomonas aeruginosa (strain ATCC 15692 / DSM 22644 / CIP 104116 / JCM 14847 / LMG 12228 / 1C / PRS 101 / PAO1).